A 365-amino-acid polypeptide reads, in one-letter code: Peptide chain release factor 2 (365 aa).

At glutamine 252 the chain carries N5-methylglutamine.

This sequence belongs to the prokaryotic/mitochondrial release factor family. Methylated by PrmC. Methylation increases the termination efficiency of RF2.

It localises to the cytoplasm. Peptide chain release factor 2 directs the termination of translation in response to the peptide chain termination codons UGA and UAA. This Escherichia coli O8 (strain IAI1) protein is Peptide chain release factor 2.